The sequence spans 110 residues: Large ribosomal subunit protein uL22 (110 aa).

Belongs to the universal ribosomal protein uL22 family. In terms of assembly, part of the 50S ribosomal subunit.

Functionally, this protein binds specifically to 23S rRNA; its binding is stimulated by other ribosomal proteins, e.g. L4, L17, and L20. It is important during the early stages of 50S assembly. It makes multiple contacts with different domains of the 23S rRNA in the assembled 50S subunit and ribosome. The globular domain of the protein is located near the polypeptide exit tunnel on the outside of the subunit, while an extended beta-hairpin is found that lines the wall of the exit tunnel in the center of the 70S ribosome. The protein is Large ribosomal subunit protein uL22 of Leptospira borgpetersenii serovar Hardjo-bovis (strain JB197).